Here is an 814-residue protein sequence, read N- to C-terminus: Immunoglobulin superfamily DCC subclass member 3 (814 aa).

The N-terminal stretch at 1–35 is a signal peptide; that stretch reads MAVQRAASPRRPPAPLWPRLLLPLLLLLLPAPSEG. Ig-like C2-type domains lie at 36–139, 140–220, 238–321, and 329–416; these read LGHS…ATMS, DFHV…IRIS, PAIL…RTAQ, and PAEF…ARLT. Cystine bridges form between cysteine 63/cysteine 117 and cysteine 160/cysteine 209. Asparagine 93 carries an N-linked (GlcNAc...) asparagine glycan. Asparagine 246 is a glycosylation site (N-linked (GlcNAc...) asparagine). 2 disulfides stabilise this stretch: cysteine 259–cysteine 307 and cysteine 351–cysteine 400. 2 N-linked (GlcNAc...) asparagine glycosylation sites follow: asparagine 381 and asparagine 382. 2 consecutive Fibronectin type-III domains span residues 426 to 520 and 523 to 618; these read PPRN…TLGE and APPP…ASER. 3 N-linked (GlcNAc...) asparagine glycosylation sites follow: asparagine 580, asparagine 604, and asparagine 634. The helical transmembrane segment at 641 to 661 threads the bilayer; it reads IVIGIHIGVTCIIFCVLFLLF. Disordered regions lie at residues 722-743 and 762-814; these read PPASAAGQPDPRPTQDPAAPAP and GKTT…HSEQ. A compositionally biased stretch (low complexity) spans 770-781; that stretch reads TEATAPCAGLAA.

This sequence belongs to the immunoglobulin superfamily. DCC family.

It localises to the membrane. The polypeptide is Immunoglobulin superfamily DCC subclass member 3 (IGDCC3) (Homo sapiens (Human)).